Reading from the N-terminus, the 122-residue chain is Large ribosomal subunit protein bL12 (122 aa).

It belongs to the bacterial ribosomal protein bL12 family. In terms of assembly, homodimer. Part of the ribosomal stalk of the 50S ribosomal subunit. Forms a multimeric L10(L12)X complex, where L10 forms an elongated spine to which 2 to 4 L12 dimers bind in a sequential fashion. Binds GTP-bound translation factors.

In terms of biological role, forms part of the ribosomal stalk which helps the ribosome interact with GTP-bound translation factors. Is thus essential for accurate translation. The protein is Large ribosomal subunit protein bL12 of Deinococcus radiodurans (strain ATCC 13939 / DSM 20539 / JCM 16871 / CCUG 27074 / LMG 4051 / NBRC 15346 / NCIMB 9279 / VKM B-1422 / R1).